The primary structure comprises 168 residues: Group IIF secretory phospholipase A2 (168 aa).

The signal sequence occupies residues 1–20; it reads MKKFFTVAILAGSVLSTAHG. Disulfide bonds link Cys-46-Cys-138, Cys-48-Cys-64, Cys-63-Cys-120, Cys-69-Cys-145, Cys-70-Cys-113, Cys-79-Cys-106, and Cys-98-Cys-111. Ca(2+)-binding residues include Tyr-47, Gly-49, and Gly-51. Residue His-67 is part of the active site. A Ca(2+)-binding site is contributed by Asp-68. Asn-92 and Asn-102 each carry an N-linked (GlcNAc...) asparagine glycan. The active site involves Asp-114. N-linked (GlcNAc...) asparagine glycosylation is found at Asn-123 and Asn-144. The tract at residues 139-168 is required for localization on the plasma membrane; it reads QGPTPNCSIYEPPPEEVTCSHQSPAPPAPP.

It belongs to the phospholipase A2 family. Ca(2+) is required as a cofactor. Expressed at high levels in placenta, testis, thymus and at lower levels in heart, kidney, liver and prostate. Highly expressed in rheumatoid arthritic tissues, including synovial lining cells in the intima, capillary endothelial cells and plasma cells.

It is found in the secreted. It localises to the cell membrane. The catalysed reaction is a 1,2-diacyl-sn-glycero-3-phosphocholine + H2O = a 1-acyl-sn-glycero-3-phosphocholine + a fatty acid + H(+). It catalyses the reaction 1-hexadecanoyl-2-(9Z-octadecenoyl)-sn-glycero-3-phospho-(1'-sn-glycerol) + H2O = 1-hexadecanoyl-sn-glycero-3-phospho-(1'-sn-glycerol) + (9Z)-octadecenoate + H(+). The enzyme catalyses 1-hexadecanoyl-2-(9Z,12Z-octadecadienoyl)-sn-glycero-3-phosphoethanolamine + H2O = 1-hexadecanoyl-sn-glycero-3-phosphoethanolamine + (9Z,12Z)-octadecadienoate + H(+). It carries out the reaction 1-hexadecanoyl-2-(5Z,8Z,11Z,14Z-eicosatetraenoyl)-sn-glycero-3-phosphoethanolamine + H2O = 1-hexadecanoyl-sn-glycero-3-phosphoethanolamine + (5Z,8Z,11Z,14Z)-eicosatetraenoate + H(+). The catalysed reaction is 1-hexadecanoyl-2-(9Z-octadecenoyl)-sn-glycero-3-phosphocholine + H2O = 1-hexadecanoyl-sn-glycero-3-phosphocholine + (9Z)-octadecenoate + H(+). It catalyses the reaction 1-hexadecanoyl-2-(9Z-octadecenoyl)-sn-glycero-3-phospho-L-serine + H2O = 1-hexadecanoyl-sn-glycero-3-phospho-L-serine + (9Z)-octadecenoate + H(+). Secretory calcium-dependent phospholipase A2 that primarily targets extracellular phospholipids. Hydrolyzes the ester bond of the fatty acyl group attached at the sn-2 position of phospholipids (phospholipase A2 activity), the catalytic efficiency decreasing in the following order: phosphatidylglycerols &gt; phosphatidylethanolamines &gt; phosphatidylcholines &gt; phosphatidylserines. May play a role in lipid mediator production in inflammatory conditions, by providing arachidonic acid to downstream cyclooxygenases and lipoxygenases. The protein is Group IIF secretory phospholipase A2 (PLA2G2F) of Homo sapiens (Human).